The primary structure comprises 491 residues: Anhydromuropeptide permease (491 aa).

The Cytoplasmic portion of the chain corresponds to 1 to 11; sequence MSSQYLRIFQQ. A helical transmembrane segment spans residues 12-32; it reads PRSAILLILGFASGLPLALTS. The Periplasmic segment spans residues 33–47; it reads GTLQAWMTVENIDLK. The helical transmembrane segment at 48–61 threads the bilayer; it reads TIGFFSLVGQAYVF. Over 62–81 the chain is Cytoplasmic; it reads KFLWSPLMDRYTPPFFGRRR. A helical membrane pass occupies residues 82–105; that stretch reads GWLLATQILLLVAIAAMGFLEPGT. Glutamine 106 is a topological domain (periplasmic). Residues 107-124 form a helical membrane-spanning segment; sequence LRWMAALAVVIAFCSASQ. Residues 125–221 lie on the Cytoplasmic side of the membrane; that stretch reads DIVFDAWKTD…VAPLRDFFGR (97 aa). A helical transmembrane segment spans residues 222–240; that stretch reads NNAWLILLLIVLYKLGDAF. Residues 241–264 are Periplasmic-facing; sequence AMSLTTTFLIRGVGFDAGEVGVVN. Residues 265–284 traverse the membrane as a helical segment; that stretch reads KTLGLLATIVGALYGGILMQ. Topologically, residues 285–287 are cytoplasmic; that stretch reads RLS. The helical transmembrane segment at 288–303 threads the bilayer; sequence LFRALLIFGILQGASN. Over 304–327 the chain is Periplasmic; it reads AGYWLLSITDKHLYSMGAAVFFEN. A helical transmembrane segment spans residues 328–346; that stretch reads LCGGMGTSAFVALLMTLCN. The Cytoplasmic segment spans residues 347–421; the sequence is KSFSATQFAL…NDNFISRTAY (75 aa). Residues 422–453 traverse the membrane as a helical segment; sequence PAGYAFAMWTLAAGVSLLAVWLLLLTMDALDL. Over 454–457 the chain is Periplasmic; the sequence is THFS. A helical membrane pass occupies residues 458–485; the sequence is FLPALLEVGVLVALSGVVLGGLLDYLAL. Over 486–491 the chain is Cytoplasmic; sequence RKTHLT.

It belongs to the major facilitator superfamily.

The protein localises to the cell inner membrane. Functionally, permease involved in cell wall peptidoglycan recycling. Transports, from the periplasm into the cytoplasm, the disaccharide N-acetylglucosaminyl-beta-1,4-anhydro-N-acetylmuramic acid (GlcNAc-anhMurNAc) and GlcNAc-anhMurNAc-peptides. Transport is dependent on the proton motive force. The polypeptide is Anhydromuropeptide permease (ampG) (Escherichia coli O157:H7).